A 1030-amino-acid polypeptide reads, in one-letter code: uncharacterized protein (1030 aa).

The segment covering 1–15 has biased composition (polar residues); the sequence is MSENSTDSKNFQFSE. A disordered region spans residues 1-53; sequence MSENSTDSKNFQFSEGSRESSNDELKVLLRDTETKEDEKSSFSNSEEESIIEN. Residues 16 to 40 show a composition bias toward basic and acidic residues; that stretch reads GSRESSNDELKVLLRDTETKEDEKS. The residue at position 41 (serine 41) is a Phosphoserine. Residues 134–290 form the Helicase ATP-binding domain; it reads IKCVERMESV…WISEIHKQPC (157 aa). 147-154 serves as a coordination point for ATP; sequence AHTSAGKT. Positions 238–241 match the DEVH box motif; it reads DEVH. The Helicase C-terminal domain occupies 357 to 561; it reads SLERIINMVL…GMILNLMRIE (205 aa).

It belongs to the helicase family. SKI2 subfamily.

The protein localises to the nucleus. This is an uncharacterized protein from Schizosaccharomyces pombe (strain 972 / ATCC 24843) (Fission yeast).